The sequence spans 874 residues: Alanine--tRNA ligase (874 aa).

The Zn(2+) site is built by histidine 562, histidine 566, cysteine 664, and histidine 668.

The protein belongs to the class-II aminoacyl-tRNA synthetase family. The cofactor is Zn(2+).

It localises to the cytoplasm. It carries out the reaction tRNA(Ala) + L-alanine + ATP = L-alanyl-tRNA(Ala) + AMP + diphosphate. Catalyzes the attachment of alanine to tRNA(Ala) in a two-step reaction: alanine is first activated by ATP to form Ala-AMP and then transferred to the acceptor end of tRNA(Ala). Also edits incorrectly charged Ser-tRNA(Ala) and Gly-tRNA(Ala) via its editing domain. In Shewanella baltica (strain OS155 / ATCC BAA-1091), this protein is Alanine--tRNA ligase.